The primary structure comprises 208 residues: 3-demethoxyubiquinol 3-hydroxylase (208 aa).

Fe cation-binding residues include E57, E87, H90, E139, E171, and H174.

This sequence belongs to the COQ7 family. The cofactor is Fe cation.

The protein localises to the cell membrane. It catalyses the reaction a 5-methoxy-2-methyl-3-(all-trans-polyprenyl)benzene-1,4-diol + AH2 + O2 = a 3-demethylubiquinol + A + H2O. The protein operates within cofactor biosynthesis; ubiquinone biosynthesis. In terms of biological role, catalyzes the hydroxylation of 2-nonaprenyl-3-methyl-6-methoxy-1,4-benzoquinol during ubiquinone biosynthesis. The sequence is that of 3-demethoxyubiquinol 3-hydroxylase from Burkholderia ambifaria (strain MC40-6).